The sequence spans 1525 residues: Autophagy-related protein 2 (1525 aa).

2 disordered regions span residues 216-247 and 712-738; these read RGTS…TDPF and AELQ…PKRI. Residues 220–230 are compositionally biased toward polar residues; that stretch reads APVTAGSTAHA. Residues 716 to 733 show a composition bias toward low complexity; that stretch reads ESSSPDSSSRESSSGSES.

This sequence belongs to the ATG2 family.

Its subcellular location is the preautophagosomal structure membrane. It is found in the endoplasmic reticulum membrane. The catalysed reaction is a 1,2-diacyl-sn-glycero-3-phosphocholine(in) = a 1,2-diacyl-sn-glycero-3-phosphocholine(out). The enzyme catalyses a 1,2-diacyl-sn-glycero-3-phospho-L-serine(in) = a 1,2-diacyl-sn-glycero-3-phospho-L-serine(out). It catalyses the reaction a 1,2-diacyl-sn-glycero-3-phosphoethanolamine(in) = a 1,2-diacyl-sn-glycero-3-phosphoethanolamine(out). Functionally, lipid transfer protein required for autophagosome completion and peroxisome degradation. Tethers the edge of the isolation membrane (IM) to the endoplasmic reticulum (ER) and mediates direct lipid transfer from ER to IM for IM expansion. ATG2 binds to the ER exit site (ERES), which is the membrane source for autophagosome formation, using basic residues in its N-terminal region (NR) and to the expanding edge of the IM through its C-terminal region. The latter binding is assisted by an ATG18-PtdIns3P interaction. ATG2 then extracts phospholipids from the membrane source using its NR and transfers them to ATG9 to the IM through its predicted beta-sheet-rich structure for membrane expansion. The chain is Autophagy-related protein 2 (ATG2) from Yarrowia lipolytica (strain CLIB 122 / E 150) (Yeast).